A 173-amino-acid polypeptide reads, in one-letter code: Monothiol glutaredoxin-S14, chloroplastic (173 aa).

The transit peptide at 1 to 63 (MALRSVKTPT…KLKPTKFRCS (63 aa)) directs the protein to the chloroplast. Positions 72 to 173 (KDTLEKLVNS…QEEVEKAMCS (102 aa)) constitute a Glutaredoxin domain. Residue lysine 89 coordinates glutathione. Residues cysteine 97 and phenylalanine 99 each coordinate [2Fe-2S] cluster. Cysteine 97 is modified (S-glutathionyl cysteine). Residues 97-100 (CGFS) form a required for CAX1 activation region. 2 residues coordinate glutathione: arginine 126 and lysine 130. The segment at 133–137 (SNWPT) is required for CAX1 activation. Glutathione is bound by residues phenylalanine 138 and 151-152 (CD).

The protein belongs to the glutaredoxin family. CGFS subfamily. As to quaternary structure, [2Fe-2S]-bridged holo-homodimer. Interacts with N-terminal part of CAX1 in yeast. Interacts in vitro with SUFE1, BOLA1, BOLA2 and BOLA4. Interacts in vivo only with SUFE1, BOLA1 and BOLA4. Interacts with SBP1. In terms of tissue distribution, highly expressed in leaves, at intermediate levels in stems and at lower levels in roots and flowers.

Its subcellular location is the plastid. The protein resides in the chloroplast. Functionally, may only reduce GSH-thiol disulfides, but not protein disulfides (Potential). Probably involved in the regulation of the redox state of the BOLA proteins (Potential). May act as Fe-S cluster donors to Fe-S cluster-requiring proteins. May protect cells against protein oxidative damage. May regulate CAX cation transporters. The GRXS14-BOLA1 heterodimer binds a labile, oxygen sensitive Fe-S cluster. The chain is Monothiol glutaredoxin-S14, chloroplastic from Arabidopsis thaliana (Mouse-ear cress).